Reading from the N-terminus, the 170-residue chain is Phosphopantetheine adenylyltransferase (170 aa).

Thr14 is a binding site for substrate. ATP-binding positions include 14-15 (TF) and His22. Residues Lys46, Leu78, and Arg92 each coordinate substrate. Residues 93–95 (GLR), Glu103, and 128–134 (WLYISST) each bind ATP.

Belongs to the bacterial CoaD family. Homohexamer. The cofactor is Mg(2+).

The protein localises to the cytoplasm. The enzyme catalyses (R)-4'-phosphopantetheine + ATP + H(+) = 3'-dephospho-CoA + diphosphate. It functions in the pathway cofactor biosynthesis; coenzyme A biosynthesis; CoA from (R)-pantothenate: step 4/5. Reversibly transfers an adenylyl group from ATP to 4'-phosphopantetheine, yielding dephospho-CoA (dPCoA) and pyrophosphate. The polypeptide is Phosphopantetheine adenylyltransferase (Oleidesulfovibrio alaskensis (strain ATCC BAA-1058 / DSM 17464 / G20) (Desulfovibrio alaskensis)).